A 55-amino-acid polypeptide reads, in one-letter code: Conotoxin Cal22c (55 aa).

A propeptide spanning residues 1 to 5 (GRPSA) is cleaved from the precursor.

Contains 4 disulfide bonds. Expressed by the venom duct.

The protein resides in the secreted. Functionally, probable neurotoxin with unknown target. Possibly targets ion channels. This chain is Conotoxin Cal22c, found in Californiconus californicus (California cone).